A 1449-amino-acid polypeptide reads, in one-letter code: uncharacterized protein (1449 aa).

Positions 1–13 (MELRSDASHKENV) are enriched in basic and acidic residues. Disordered stretches follow at residues 1-32 (MELR…RRSL), 123-201 (SNLS…LRSW), 258-298 (APQE…RRRR), 315-437 (LSDS…NKAQ), 523-551 (KQVQ…LGRS), 1257-1278 (DQGP…SKAH), and 1399-1449 (RLAA…QLQL). Positions 123-133 (SNLSINETSSP) are enriched in polar residues. Composition is skewed to polar residues over residues 315–333 (LSDS…TLGT) and 384–394 (PCSSAFSNTAW). The span at 400 to 419 (QKGEEGAPRERVHREEERTA) shows a compositional bias: basic and acidic residues. A compositionally biased stretch (polar residues) spans 426–437 (VPASSASKNKAQ). Residues 1258–1270 (QGPRAHSSPEPRA) are compositionally biased toward basic and acidic residues.

This is an uncharacterized protein from Homo sapiens (Human).